Here is an 82-residue protein sequence, read N- to C-terminus: Small ribosomal subunit protein bS16 (82 aa).

Belongs to the bacterial ribosomal protein bS16 family.

The protein is Small ribosomal subunit protein bS16 of Pasteurella multocida (strain Pm70).